We begin with the raw amino-acid sequence, 362 residues long: MIGSFRDLGRRGLFLLDPETAHGMSIAALKSGLVPTCRVSNDPRLRQIVAGLDFANPLGMAAGYDKNAEVPEALLKLGFGFTEIGTVTPKPQPGNPRPRIFRLVEDEGVINRLGFNNEGHEAALRRLQPIRGNGIIGVNIGANKDSADRIADYVAGIRRFYSVARYFTANISSPNTPGLRDLQARESLSALLSAVLAARDDEAAKAGKKIPVFLKIAPDLTEEGMDDIAAEVLAHALDGLIVSNTTLSRDGLKDQVQAKEAGGLSGKPVFERSTVVLAKMRRRVGAALPIIGVGGVSSAETALEKIRAGADLVQLYSCMVYEGPGLPGRVVAGLSKLLDRERVASIRELRDSRLDYWADRKV.

Residues 62–66 (AGYDK) and Thr86 each bind FMN. Lys66 is a binding site for substrate. Residue 111–115 (NRLGF) participates in substrate binding. 2 residues coordinate FMN: Asn139 and Asn170. Asn170 contributes to the substrate binding site. Ser173 acts as the Nucleophile in catalysis. Asn175 provides a ligand contact to substrate. The FMN site is built by Lys215 and Ser243. A substrate-binding site is contributed by 244–245 (NT). Residues Gly266, Gly295, and 316–317 (YS) contribute to the FMN site.

The protein belongs to the dihydroorotate dehydrogenase family. Type 2 subfamily. As to quaternary structure, monomer. FMN is required as a cofactor.

The protein resides in the cell membrane. It catalyses the reaction (S)-dihydroorotate + a quinone = orotate + a quinol. It functions in the pathway pyrimidine metabolism; UMP biosynthesis via de novo pathway; orotate from (S)-dihydroorotate (quinone route): step 1/1. Catalyzes the conversion of dihydroorotate to orotate with quinone as electron acceptor. The chain is Dihydroorotate dehydrogenase (quinone) from Rhizobium rhizogenes (strain K84 / ATCC BAA-868) (Agrobacterium radiobacter).